Consider the following 242-residue polypeptide: Biosynthetic peptidoglycan transglycosylase (242 aa).

The helical transmembrane segment at 19–39 (LMVVLAVFWGGGIALFSVAPV) threads the bilayer.

Belongs to the glycosyltransferase 51 family.

The protein resides in the cell inner membrane. It carries out the reaction [GlcNAc-(1-&gt;4)-Mur2Ac(oyl-L-Ala-gamma-D-Glu-L-Lys-D-Ala-D-Ala)](n)-di-trans,octa-cis-undecaprenyl diphosphate + beta-D-GlcNAc-(1-&gt;4)-Mur2Ac(oyl-L-Ala-gamma-D-Glu-L-Lys-D-Ala-D-Ala)-di-trans,octa-cis-undecaprenyl diphosphate = [GlcNAc-(1-&gt;4)-Mur2Ac(oyl-L-Ala-gamma-D-Glu-L-Lys-D-Ala-D-Ala)](n+1)-di-trans,octa-cis-undecaprenyl diphosphate + di-trans,octa-cis-undecaprenyl diphosphate + H(+). It participates in cell wall biogenesis; peptidoglycan biosynthesis. Functionally, peptidoglycan polymerase that catalyzes glycan chain elongation from lipid-linked precursors. This Escherichia coli O139:H28 (strain E24377A / ETEC) protein is Biosynthetic peptidoglycan transglycosylase.